The sequence spans 185 residues: Large ribosomal subunit protein eL19 (185 aa).

A disordered region spans residues 152–185 (SDKLTSQQEARRAKNTASRAKRNEKAQIVAKVDV).

This sequence belongs to the eukaryotic ribosomal protein eL19 family.

The chain is Large ribosomal subunit protein eL19 (RPL19) from Tetrahymena thermophila (strain SB210).